Here is a 135-residue protein sequence, read N- to C-terminus: NADH-quinone oxidoreductase subunit A (135 aa).

Transmembrane regions (helical) follow at residues 9–29 (YFPI…LLTV), 67–87 (VGML…WVVV), and 97–117 (LFGF…FFYI).

It belongs to the complex I subunit 3 family. In terms of assembly, NDH-1 is composed of 14 different subunits. Subunits NuoA, H, J, K, L, M, N constitute the membrane sector of the complex.

The protein localises to the cell inner membrane. It carries out the reaction a quinone + NADH + 5 H(+)(in) = a quinol + NAD(+) + 4 H(+)(out). Functionally, NDH-1 shuttles electrons from NADH, via FMN and iron-sulfur (Fe-S) centers, to quinones in the respiratory chain. The immediate electron acceptor for the enzyme in this species is believed to be ubiquinone. Couples the redox reaction to proton translocation (for every two electrons transferred, four hydrogen ions are translocated across the cytoplasmic membrane), and thus conserves the redox energy in a proton gradient. The chain is NADH-quinone oxidoreductase subunit A from Solibacter usitatus (strain Ellin6076).